An 897-amino-acid chain; its full sequence is F-BAR domain only protein 1 (897 aa).

A mediates membrane-binding region spans residues 1–276 (MIHFFHTLQG…VGFEEYLSSL (276 aa)). The F-BAR domain maps to 2–248 (IHFFHTLQGE…NVENIGIENL (247 aa)). Residues 134 to 154 (LQKTREGYHSKCVELERLRKE) adopt a coiled-coil conformation. The segment at 475–537 (VEDSGLDSPS…PNPAPSSQSN (63 aa)) is disordered. Over residues 501-520 (PSSQSQSKDSINAASQSRGG) the composition is skewed to polar residues. An MHD domain is found at 630–894 (SWPVAAAITE…RFATGKYMAG (265 aa)).

Belongs to the FCHO family. In terms of assembly, may oligomerize and form homotetramer. Interacts with acvr1l/alk8; linking this receptor to clathrin-mediated endocytosis.

It is found in the membrane. It localises to the clathrin-coated pit. In terms of biological role, may function in an early step of clathrin-mediated endocytosis. May regulate Bmp signaling by regulating clathrin-mediated endocytosis of Bmp receptors. This is F-BAR domain only protein 1 (fcho1) from Danio rerio (Zebrafish).